Reading from the N-terminus, the 489-residue chain is Oxysterol-binding protein-related protein 1B (489 aa).

It belongs to the OSBP family. Expressed at low levels in flowers.

May be involved in the transport of sterols. The protein is Oxysterol-binding protein-related protein 1B (ORP1B) of Arabidopsis thaliana (Mouse-ear cress).